The primary structure comprises 219 residues: Ribosome hibernation promotion factor (219 aa).

It belongs to the HPF/YfiA ribosome-associated protein family. Long HPF subfamily. Interacts with 100S ribosomes.

Its subcellular location is the cytoplasm. Required for dimerization of active 70S ribosomes into 100S ribosomes in stationary phase; 100S ribosomes are translationally inactive and sometimes present during exponential growth. This Mycobacterium tuberculosis (strain ATCC 25618 / H37Rv) protein is Ribosome hibernation promotion factor.